The chain runs to 370 residues: tRNA-specific 2-thiouridylase MnmA (370 aa).

Residues 24–31 (AMSGGVDS) and Leu-50 each bind ATP. Cys-119 (nucleophile) is an active-site residue. The cysteines at positions 119 and 215 are disulfide-linked. Gly-143 provides a ligand contact to ATP. Residues 165–167 (KDQ) form an interaction with tRNA region. Catalysis depends on Cys-215, which acts as the Cysteine persulfide intermediate.

Belongs to the MnmA/TRMU family.

The protein localises to the cytoplasm. The catalysed reaction is S-sulfanyl-L-cysteinyl-[protein] + uridine(34) in tRNA + AH2 + ATP = 2-thiouridine(34) in tRNA + L-cysteinyl-[protein] + A + AMP + diphosphate + H(+). Catalyzes the 2-thiolation of uridine at the wobble position (U34) of tRNA, leading to the formation of s(2)U34. The polypeptide is tRNA-specific 2-thiouridylase MnmA (Wolbachia pipientis wMel).